A 99-amino-acid polypeptide reads, in one-letter code: UPF0045 protein MTH_1187 (99 aa).

It belongs to the UPF0045 family. Homotetramer.

The polypeptide is UPF0045 protein MTH_1187 (Methanothermobacter thermautotrophicus (strain ATCC 29096 / DSM 1053 / JCM 10044 / NBRC 100330 / Delta H) (Methanobacterium thermoautotrophicum)).